The chain runs to 496 residues: Acyltransferase M4 (496 aa).

Catalysis depends on His-163, which acts as the Proton acceptor.

This sequence belongs to the plant acyltransferase family. In terms of assembly, monomer.

It participates in secondary metabolite biosynthesis. In terms of biological role, acyltransferase; part of the gene cluster that mediates the biosynthesis of squalestatin S1 (SQS1, also known as zaragozic acid A), a heavily oxidized fungal polyketide that offers potent cholesterol lowering activity by targeting squalene synthase (SS). SQS1 is composed of a 2,8-dioxobicyclic[3.2.1]octane-3,4,5-tricarboxyclic acid core that is connected to two lipophilic polyketide arms. These initial steps feature the priming of an unusual benzoic acid starter unit onto the highly reducing polyketide synthase pks2, followed by oxaloacetate extension and product release to generate a tricarboxylic acid containing product. The phenylalanine ammonia lyase (PAL) M7 and the acyl-CoA ligase M9 are involved in transforming phenylalanine into benzoyl-CoA. The citrate synthase-like protein R3 is involved in connecting the C-alpha-carbons of the hexaketide chain and oxaloacetate to afford the tricarboxylic acid unit. The potential hydrolytic enzymes, M8 and M10, are in close proximity to pks2 and may participate in product release. On the other side, the tetraketide arm is synthesized by a the squalestatin tetraketide synthase pks1 and enzymatically esterified to the core in the last biosynthetic step, by the acetyltransferase M4. The biosynthesis of the tetraketide must involve 3 rounds of chain extension. After the first and second rounds methyl-transfer occurs, and in all rounds of extension the ketoreductase and dehydratase are active. The enoyl reductase and C-MeT of pks1 are not active in the final round of extension. The acetyltransferase M4 appears to have a broad substrate selectivity for its acyl CoA substrate, allowing the in vitro synthesis of novel squalestatins. The biosynthesis of SQS1 requires several oxidative steps likely performed by oxidoreductases M1, R1 and R2. Finally, in support of the identification of the cluster as being responsible for SQS1 production, the cluster contains a gene encoding a putative squalene synthase (SS) R6, suggesting a likely mechanism for self-resistance. In Phoma sp. (strain ATCC 20986 / MF5453), this protein is Acyltransferase M4.